The sequence spans 331 residues: Adenosine deaminase (331 aa).

His-12 and His-14 together coordinate Zn(2+). 3 residues coordinate substrate: His-14, Asp-16, and Gly-170. Residue His-197 participates in Zn(2+) binding. Glu-200 functions as the Proton donor in the catalytic mechanism. Asp-278 contributes to the Zn(2+) binding site.

The protein belongs to the metallo-dependent hydrolases superfamily. Adenosine and AMP deaminases family. Adenosine deaminase subfamily. Zn(2+) serves as cofactor.

The enzyme catalyses adenosine + H2O + H(+) = inosine + NH4(+). It carries out the reaction 2'-deoxyadenosine + H2O + H(+) = 2'-deoxyinosine + NH4(+). Its function is as follows. Catalyzes the hydrolytic deamination of adenosine and 2-deoxyadenosine. This chain is Adenosine deaminase, found in Clostridium botulinum (strain 657 / Type Ba4).